A 481-amino-acid chain; its full sequence is Halobacterial transducer protein 9 (481 aa).

The region spanning 10 to 81 is the PAS domain; that stretch reads SPFTVPLLLN…NKVADTPIDA (72 aa). Positions 208–444 constitute a Methyl-accepting transducer domain; it reads DVERLEAASQ…EIAAMVDETA (237 aa).

Belongs to the methyl-accepting chemotaxis (MCP) protein family.

Its subcellular location is the cytoplasm. In terms of biological role, potentially involved in chemo- or phototactic signal transduction. This Halobacterium salinarum (strain ATCC 700922 / JCM 11081 / NRC-1) (Halobacterium halobium) protein is Halobacterial transducer protein 9 (htr9).